The sequence spans 270 residues: Ethanolamine ammonia-lyase small subunit (270 aa).

Adenosylcob(III)alamin-binding residues include Val166, Glu187, and Cys216.

It belongs to the EutC family. In terms of assembly, the basic unit is a heterodimer which dimerizes to form tetramers. The heterotetramers trimerize; 6 large subunits form a core ring with 6 small subunits projecting outwards. Adenosylcob(III)alamin serves as cofactor.

Its subcellular location is the bacterial microcompartment. It catalyses the reaction ethanolamine = acetaldehyde + NH4(+). It participates in amine and polyamine degradation; ethanolamine degradation. Catalyzes the deamination of various vicinal amino-alcohols to oxo compounds. Allows this organism to utilize ethanolamine as the sole source of nitrogen and carbon in the presence of external vitamin B12. The chain is Ethanolamine ammonia-lyase small subunit from Ralstonia nicotianae (strain ATCC BAA-1114 / GMI1000) (Ralstonia solanacearum).